The following is a 209-amino-acid chain: Uracil phosphoribosyltransferase (209 aa).

Residues Arg-79, Arg-104, and 131-139 (DPMLATGGS) each bind 5-phospho-alpha-D-ribose 1-diphosphate. Residues Ile-194 and 199 to 201 (GDA) each bind uracil. Residue Asp-200 coordinates 5-phospho-alpha-D-ribose 1-diphosphate.

The protein belongs to the UPRTase family. Homodimer. Mg(2+) is required as a cofactor.

The enzyme catalyses UMP + diphosphate = 5-phospho-alpha-D-ribose 1-diphosphate + uracil. The protein operates within pyrimidine metabolism; UMP biosynthesis via salvage pathway; UMP from uracil: step 1/1. Its activity is regulated as follows. Allosterically activated by GTP. Functionally, catalyzes the conversion of uracil and 5-phospho-alpha-D-ribose 1-diphosphate (PRPP) to UMP and diphosphate. The polypeptide is Uracil phosphoribosyltransferase (Bacillus caldolyticus).